The following is a 520-amino-acid chain: Protein RCC2 (520 aa).

The tract at residues 1-78 (MPRKKGAAWE…RPATAGKAAG (78 aa)) is disordered. Serine 14 is modified (phosphoserine). A Phosphothreonine modification is found at threonine 18. The segment covering 22–34 (GPRRRGGPAGRKR) has biased composition (basic residues). Phosphoserine is present on residues serine 41, serine 42, serine 43, serine 44, serine 48, and serine 49. Over residues 69 to 78 (RPATAGKAAG) the composition is skewed to low complexity. 2 positions are modified to N6-acetyllysine: lysine 90 and lysine 122. 7 RCC1 repeats span residues 101 to 163 (KGQL…SLLI), 166 to 217 (EGKL…ALTD), 219 to 269 (GSVF…LMDC), 271 to 345 (GNLY…VLDS), 346 to 399 (QKRV…AVSE), 401 to 445 (GGLF…VAAD), and 446 to 499 (ESTI…VIAR). Lysine 291 bears the N6-acetyllysine mark. Residues 316 to 323 (KTKDGQIL) are required for interaction with RAC1. A Phosphothreonine modification is found at threonine 340. At lysine 375 the chain carries N6-acetyllysine.

In terms of assembly, interacts with RAC1. Interacts with nucleotide-free and with GDP and GTP-bound forms of RAC1, with a slight preference for GDP-bound RAC1. Binds preferentially to the nucleotide-free form of RAC1. Interacts with CORO1C. Interacts with microtubules.

It localises to the nucleus. It is found in the nucleolus. The protein localises to the cytoplasm. Its subcellular location is the cytoskeleton. The protein resides in the chromosome. It localises to the centromere. It is found in the spindle. The protein localises to the midbody. Its subcellular location is the cell membrane. Multifunctional protein that may affect its functions by regulating the activity of small GTPases, such as RAC1 and RALA. Required for normal progress through the cell cycle, both during interphase and during mitosis. Required for the presence of normal levels of MAD2L1, AURKB and BIRC5 on inner centromeres during mitosis, and for normal attachment of kinetochores to mitotic spindles. Required for normal organization of the microtubule cytoskeleton in interphase cells. Functions as a guanine nucleotide exchange factor (GEF) for RALA. Interferes with the activation of RAC1 by guanine nucleotide exchange factors. Prevents accumulation of active, GTP-bound RAC1, and suppresses RAC1-mediated reorganization of the actin cytoskeleton and formation of membrane protrusions. Required for normal cellular responses to contacts with the extracellular matrix of adjacent cells, and for directional cell migration in response to a fibronectin gradient (in vitro). This is Protein RCC2 (Rcc2) from Mus musculus (Mouse).